The following is a 321-amino-acid chain: MRNTFLEFEQPLAELENKIEQLRYVQADSAVDISDEIGRLQQKSQTLAKEIYGKLTPWQTALVARHPQRPYTLDYVREIFTDFHELHGDRMYADDQSIVGGLARFNGQSCMVIGHQKGRDTKERAARNFGMPRPEGYRKAQRLMRLAEKFKLPIFTFVDTPGAYPGIGAEERGQSEAIGHNLYVMAELKVPVIVTIIGEGGSGGALAIAVGNAVLMLQYSTYSVISPEGCASILWRSADKAPEAAEALAITAPRLKDLGLIDRVVNEPIGGAHRDPRVMARLLRRALGDSLRQLQDLTPEQLVEQRLERVLAYGRFQEVRG.

The 255-residue stretch at 39-293 (RLQQKSQTLA…RRALGDSLRQ (255 aa)) folds into the CoA carboxyltransferase C-terminal domain.

The protein belongs to the AccA family. In terms of assembly, acetyl-CoA carboxylase is a heterohexamer composed of biotin carboxyl carrier protein (AccB), biotin carboxylase (AccC) and two subunits each of ACCase subunit alpha (AccA) and ACCase subunit beta (AccD).

It is found in the cytoplasm. It carries out the reaction N(6)-carboxybiotinyl-L-lysyl-[protein] + acetyl-CoA = N(6)-biotinyl-L-lysyl-[protein] + malonyl-CoA. It functions in the pathway lipid metabolism; malonyl-CoA biosynthesis; malonyl-CoA from acetyl-CoA: step 1/1. Its function is as follows. Component of the acetyl coenzyme A carboxylase (ACC) complex. First, biotin carboxylase catalyzes the carboxylation of biotin on its carrier protein (BCCP) and then the CO(2) group is transferred by the carboxyltransferase to acetyl-CoA to form malonyl-CoA. The protein is Acetyl-coenzyme A carboxylase carboxyl transferase subunit alpha of Bordetella avium (strain 197N).